The sequence spans 350 residues: Holliday junction branch migration complex subunit RuvB (350 aa).

Residues 1-20 (MIEADRLITASPREREEQQD) are disordered. The tract at residues 4–184 (ADRLITASPR…FGIVQRLEFY (181 aa)) is large ATPase domain (RuvB-L). Residues Ile-23, Arg-24, Gly-65, Lys-68, Thr-69, Thr-70, 131–133 (EDF), Arg-174, Tyr-184, and Arg-221 contribute to the ATP site. Thr-69 contacts Mg(2+). Residues 185-255 (GIDDLATIVT…IADQALNLLD (71 aa)) form a small ATPAse domain (RuvB-S) region. Residues 258 to 350 (ERGFDHSDRR…SGDLFAVSDE (93 aa)) are head domain (RuvB-H). Arg-294, Arg-313, and Arg-318 together coordinate DNA.

Belongs to the RuvB family. In terms of assembly, homohexamer. Forms an RuvA(8)-RuvB(12)-Holliday junction (HJ) complex. HJ DNA is sandwiched between 2 RuvA tetramers; dsDNA enters through RuvA and exits via RuvB. An RuvB hexamer assembles on each DNA strand where it exits the tetramer. Each RuvB hexamer is contacted by two RuvA subunits (via domain III) on 2 adjacent RuvB subunits; this complex drives branch migration. In the full resolvosome a probable DNA-RuvA(4)-RuvB(12)-RuvC(2) complex forms which resolves the HJ.

It localises to the cytoplasm. The enzyme catalyses ATP + H2O = ADP + phosphate + H(+). In terms of biological role, the RuvA-RuvB-RuvC complex processes Holliday junction (HJ) DNA during genetic recombination and DNA repair, while the RuvA-RuvB complex plays an important role in the rescue of blocked DNA replication forks via replication fork reversal (RFR). RuvA specifically binds to HJ cruciform DNA, conferring on it an open structure. The RuvB hexamer acts as an ATP-dependent pump, pulling dsDNA into and through the RuvAB complex. RuvB forms 2 homohexamers on either side of HJ DNA bound by 1 or 2 RuvA tetramers; 4 subunits per hexamer contact DNA at a time. Coordinated motions by a converter formed by DNA-disengaged RuvB subunits stimulates ATP hydrolysis and nucleotide exchange. Immobilization of the converter enables RuvB to convert the ATP-contained energy into a lever motion, pulling 2 nucleotides of DNA out of the RuvA tetramer per ATP hydrolyzed, thus driving DNA branch migration. The RuvB motors rotate together with the DNA substrate, which together with the progressing nucleotide cycle form the mechanistic basis for DNA recombination by continuous HJ branch migration. Branch migration allows RuvC to scan DNA until it finds its consensus sequence, where it cleaves and resolves cruciform DNA. In Ectopseudomonas mendocina (strain ymp) (Pseudomonas mendocina), this protein is Holliday junction branch migration complex subunit RuvB.